Consider the following 552-residue polypeptide: Probable protein kinase UbiB (552 aa).

A Protein kinase domain is found at 121 to 504 (HFDTVPLASA…QGLQRRVVNA (384 aa)). Residues 127 to 135 (LASASISQV) and Lys-149 contribute to the ATP site. The active-site Proton acceptor is Asp-284. Helical transmembrane passes span 501-521 (VVNAIVGSGLLVAAAVLYGLH) and 530-550 (IPVWSLISGCIGALALFSAWW).

It belongs to the ABC1 family. UbiB subfamily.

It is found in the cell inner membrane. It participates in cofactor biosynthesis; ubiquinone biosynthesis [regulation]. Functionally, is probably a protein kinase regulator of UbiI activity which is involved in aerobic coenzyme Q (ubiquinone) biosynthesis. The chain is Probable protein kinase UbiB from Xylella fastidiosa (strain M23).